Consider the following 544-residue polypeptide: Chaperonin GroEL (544 aa).

Residues 30-33 (TLGP), lysine 51, 87-91 (DGTTT), glycine 415, and aspartate 495 contribute to the ATP site.

This sequence belongs to the chaperonin (HSP60) family. Forms a cylinder of 14 subunits composed of two heptameric rings stacked back-to-back. Interacts with the co-chaperonin GroES.

The protein localises to the cytoplasm. It catalyses the reaction ATP + H2O + a folded polypeptide = ADP + phosphate + an unfolded polypeptide.. In terms of biological role, together with its co-chaperonin GroES, plays an essential role in assisting protein folding. The GroEL-GroES system forms a nano-cage that allows encapsulation of the non-native substrate proteins and provides a physical environment optimized to promote and accelerate protein folding. The polypeptide is Chaperonin GroEL (Neisseria meningitidis serogroup A / serotype 4A (strain DSM 15465 / Z2491)).